A 108-amino-acid polypeptide reads, in one-letter code: UPF0060 membrane protein Spro_2289 (108 aa).

Transmembrane regions (helical) follow at residues 6–26 (LLFF…YLWL), 31–51 (SAWL…LLTL), 61–81 (AAYG…VDGV), and 85–105 (ALDW…VSGW).

This sequence belongs to the UPF0060 family.

The protein resides in the cell inner membrane. The protein is UPF0060 membrane protein Spro_2289 of Serratia proteamaculans (strain 568).